The following is a 543-amino-acid chain: ABC transport system permease protein p69 (543 aa).

12 consecutive transmembrane segments (helical) span residues 18-38, 78-98, 115-135, 141-161, 211-231, 237-257, 288-308, 354-374, 379-399, 413-433, 482-502, and 510-530; these read IWYWKLLIIIAVLAIVIYSWI, AFFVTGGSFLGFIFAILFSYW, ITIVLRAFPVLLFGFLFSNLF, ATLTISWFSFLWNTKYITTFF, TLLSIFGIGGIGQLIVDPLSI, LVLIPLVVLITFLIFIEVVVF, IIFILFIVVLISLSLANLVTI, ISLISLVVIFSILFGFISCNL, FSISFKILLLFVRVVPSILLF, IILVLLINHGSSYGQLMSINF, LILFGSFGGSIIGSRITNFFE, and GSVTIPLMVYLIAIEIIFLSV. An ABC transmembrane type-1 domain is found at 74-256; sequence LAQTAFFVTG…TFLIFIEVVV (183 aa).

This sequence belongs to the binding-protein-dependent transport system permease family.

It is found in the cell membrane. Functionally, probably part of a high-affinity transport system. The sequence is that of ABC transport system permease protein p69 (p69) from Mycoplasma genitalium (strain ATCC 33530 / DSM 19775 / NCTC 10195 / G37) (Mycoplasmoides genitalium).